We begin with the raw amino-acid sequence, 598 residues long: MDKSKIRNFSIIAHIDHGKSTLADRILELTETVEKRDLKAQHLDSMDLEKERGITIKLNAVQIKYKDYVFHLIDTPGHVDFTYEVSRSLAASEGAILLVDATQGIEAQTLANVYLAMDNGLEIIPVINKIDLPSSDPEAVKKEIEEVIGIDASDAILISAKTGKNIEDVLKAVIEKIPAPKNADDNKPLKALVFDSYYDQYRGVVLLIRIFEGKIKVGDEFFFMQSKNKFHATELGVRKPVELKKDSLEAGEVGWLSASIRNAKDVSVGDTITLYNNPTEKPLQGYKKLKPVVYTGFFPIDSQDYDDLKESLIKISLSDSSISFEPETSKALGFGFRVGFLGMLHMEILQERLSREFNIDLIATAPSVEFHVTTTNGEMLSISNPSLLPEKNYIQKIEEPYIKASIILPKEYVGAVMEMCQGKRGVYQDLEFLDENRRRLVYNLPLSEIVFDFFDRLKSLTKGYASFDYEIIGYLESDLIKVDVLLNGEKIDALAIIVHKDFAYSRGRDLTVKLKEVIPRQNFEIPVQAAIGAKVIARETIKAYRKDVTAKLYGGDVTRRQKLLKKQKAGKKRMKSIGSVEIPQEAFLAILETDVTKK.

One can recognise a tr-type G domain in the interval serine 4–lysine 181. GTP is bound by residues aspartate 16–threonine 21 and asparagine 128–aspartate 131.

The protein belongs to the TRAFAC class translation factor GTPase superfamily. Classic translation factor GTPase family. LepA subfamily.

It localises to the cell membrane. The catalysed reaction is GTP + H2O = GDP + phosphate + H(+). Functionally, required for accurate and efficient protein synthesis under certain stress conditions. May act as a fidelity factor of the translation reaction, by catalyzing a one-codon backward translocation of tRNAs on improperly translocated ribosomes. Back-translocation proceeds from a post-translocation (POST) complex to a pre-translocation (PRE) complex, thus giving elongation factor G a second chance to translocate the tRNAs correctly. Binds to ribosomes in a GTP-dependent manner. In Mycoplasma mobile (strain ATCC 43663 / 163K / NCTC 11711) (Mesomycoplasma mobile), this protein is Elongation factor 4.